The following is a 1196-amino-acid chain: Cingulin (1196 aa).

The head stretch occupies residues 7–354 (MAEPRGPVDH…LVMTSGSAKG (348 aa)). A ZIM motif is present at residues 48–62 (ANTYGVAVRVQGIAG). Residues 54-67 (AVRVQGIAGQPFVV) form an interaction with TJP1/ZO1 region. A disordered region spans residues 82–105 (IKGTNNRGPPGALSSDSELPESTY). Residues Ser-95, Ser-96, Ser-98, Ser-135, Ser-137, Ser-140, Ser-155, Ser-165, and Ser-214 each carry the phosphoserine modification. The segment covering 95-105 (SSDSELPESTY) has biased composition (polar residues). Residues 183–263 (NKFDSRQGGQ…NQGPLGGFSC (81 aa)) form a disordered region. Residues 218–231 (RLPRDTLDEREHQF) are compositionally biased toward basic and acidic residues. Residues 245–256 (MGNSKQSSQNQG) are compositionally biased toward polar residues. Ser-274 is subject to Phosphoserine. Positions 355-1150 (LTGQSELSQK…ARIKTLEKDS (796 aa)) form a coiled coil. N6-acetyllysine is present on Lys-576. Basic and acidic residues predominate over residues 884 to 897 (AQRQAKEWATEAEK). Disordered stretches follow at residues 884–906 (AQRQ…SRLQ), 1023–1061 (DLKS…EERE), and 1149–1174 (DSWR…EEFD). A compositionally biased stretch (low complexity) spans 1038–1050 (SASLSQLESQNQE). Basic and acidic residues predominate over residues 1051–1061 (LQERLQAEERE). The tract at residues 1155 to 1196 (SRSAAESAQREGLSSDEEFDSVYDPSSIASLLTESNLQTSSC) is tail. 3 positions are modified to phosphoserine: Ser-1168, Ser-1169, and Ser-1175.

It belongs to the cingulin family. Homodimer. Interacts with TJP1/ZO1 and SPEF1.

The protein resides in the cell junction. The protein localises to the tight junction. Functionally, probably plays a role in the formation and regulation of the tight junction (TJ) paracellular permeability barrier. The sequence is that of Cingulin from Canis lupus familiaris (Dog).